The primary structure comprises 471 residues: Collagenase 3 (471 aa).

The signal sequence occupies residues 1–19 (MHPGVLAAFLFLSWTHCRA). The propeptide at 20-103 (LPLPSGGDED…PRCGVPDVGE (84 aa)) is activation peptide. A Cysteine switch motif is present at residues 94 to 101 (PRCGVPDV). Residue cysteine 96 participates in Zn(2+) binding. An N-linked (GlcNAc...) asparagine glycan is attached at asparagine 117. Residue aspartate 128 participates in Ca(2+) binding. An N-linked (GlcNAc...) asparagine glycan is attached at asparagine 152. A Ca(2+)-binding site is contributed by aspartate 162. Zn(2+) is bound by residues histidine 172 and aspartate 174. The interval 176–246 (YPFDGPSGLL…GALMFPIYTY (71 aa)) is interaction with TIMP2. Ca(2+)-binding residues include aspartate 179, glycine 180, serine 182, and leucine 184. Histidine 187 is a Zn(2+) binding site. Ca(2+)-binding residues include asparagine 194, glycine 196, and aspartate 198. Histidine 200 contributes to the Zn(2+) binding site. Residues aspartate 202, aspartate 203, and glutamate 205 each coordinate Ca(2+). Histidine 222 lines the Zn(2+) pocket. Glutamate 223 is a catalytic residue. Residues histidine 226, histidine 232, and methionine 240 each coordinate Zn(2+). Residues 263–284 (QSLYGPGDEDPNPKHPKTPDKC) are disordered. The segment at 268–471 (PGDEDPNPKH…VMPANSILWC (204 aa)) is interaction with collagen. Basic and acidic residues predominate over residues 273-284 (PNPKHPKTPDKC). 4 Hemopexin repeats span residues 281 to 330 (PDKC…WPEL), 331 to 377 (PNRI…GLPK), 379 to 427 (VKKI…FPGI), and 428 to 471 (GDKV…ILWC). A disulfide bridge connects residues cysteine 284 and cysteine 471. Residues aspartate 291, isoleucine 293, aspartate 335, and alanine 337 each coordinate Ca(2+). Tyrosine 366 carries the post-translational modification Phosphotyrosine; by PKDCC. Residues serine 383, alanine 385, aspartate 432, and valine 434 each coordinate Ca(2+).

This sequence belongs to the peptidase M10A family. In terms of assembly, monomer. Interacts with TIMP1, TIMP2 and TIMP3. Binds (via the C-terminal region) to collagen. It depends on Ca(2+) as a cofactor. The cofactor is Zn(2+). The proenzyme is activated by removal of the propeptide; this cleavage can be effected by other matrix metalloproteinases, such as MMP2, MMP3 and MMP14 and may involve several cleavage steps. Cleavage can also be autocatalytic, after partial maturation by another protease or after treatment with 4-aminophenylmercuric acetate (APMA) (in vitro). Post-translationally, N-glycosylated. In terms of processing, tyrosine phosphorylated by PKDCC/VLK. As to expression, detected in fetal cartilage and calvaria, in chondrocytes of hypertrophic cartilage in vertebrae and in the dorsal end of ribs undergoing ossification, as well as in osteoblasts and periosteal cells below the inner periosteal region of ossified ribs. Detected in chondrocytes from in joint cartilage that have been treated with TNF and IL1B, but not in untreated chondrocytes. Detected in T lymphocytes. Detected in breast carcinoma tissue.

The protein localises to the secreted. It localises to the extracellular space. Its subcellular location is the extracellular matrix. Its activity is regulated as follows. Inhibited by TIMP1, TIMP2 and TIMP3. Inhibited by acetohydroxamic acid and other zinc chelators. Its function is as follows. Plays a role in the degradation of extracellular matrix proteins including fibrillar collagen, fibronectin, TNC and ACAN. Cleaves triple helical collagens, including type I, type II and type III collagen, but has the highest activity with soluble type II collagen. Can also degrade collagen type IV, type XIV and type X. May also function by activating or degrading key regulatory proteins, such as TGFB1 and CCN2. Plays a role in wound healing, tissue remodeling, cartilage degradation, bone development, bone mineralization and ossification. Required for normal embryonic bone development and ossification. Plays a role in the healing of bone fractures via endochondral ossification. Plays a role in wound healing, probably by a mechanism that involves proteolytic activation of TGFB1 and degradation of CCN2. Plays a role in keratinocyte migration during wound healing. May play a role in cell migration and in tumor cell invasion. This chain is Collagenase 3 (MMP13), found in Homo sapiens (Human).